A 479-amino-acid chain; its full sequence is Glycogen synthase (479 aa).

Lysine 15 provides a ligand contact to ADP-alpha-D-glucose.

The protein belongs to the glycosyltransferase 1 family. Bacterial/plant glycogen synthase subfamily.

The enzyme catalyses [(1-&gt;4)-alpha-D-glucosyl](n) + ADP-alpha-D-glucose = [(1-&gt;4)-alpha-D-glucosyl](n+1) + ADP + H(+). The protein operates within glycan biosynthesis; glycogen biosynthesis. Functionally, synthesizes alpha-1,4-glucan chains using ADP-glucose. The polypeptide is Glycogen synthase (Acidiphilium cryptum (strain JF-5)).